A 51-amino-acid polypeptide reads, in one-letter code: Ovomucoid (51 aa).

In terms of domain architecture, Kazal-like spans 1 to 49 (VDCSEYPQPACTTERRPVCGSNNKTYSNKCNFCNAVVKSNGTLTVSHFG). Intrachain disulfides connect cysteine 3/cysteine 33, cysteine 11/cysteine 30, and cysteine 19/cysteine 51. Asparagine 40 carries an N-linked (GlcNAc...) asparagine glycan.

Its subcellular location is the secreted. The protein is Ovomucoid of Polyplectron napoleonis (Palawan peacock-pheasant).